A 489-amino-acid polypeptide reads, in one-letter code: Acetyl-coenzyme A carboxylase carboxyl transferase subunit beta, chloroplastic (489 aa).

Positions 222–489 (LWVQCENCYG…FFPLNSNSIK (268 aa)) constitute a CoA carboxyltransferase N-terminal domain. Zn(2+)-binding residues include Cys226, Cys229, Cys245, and Cys248. The segment at 226–248 (CENCYGLNYKKFFRSKMNICEQC) adopts a C4-type zinc-finger fold.

It belongs to the AccD/PCCB family. In terms of assembly, acetyl-CoA carboxylase is a heterohexamer composed of biotin carboxyl carrier protein, biotin carboxylase and 2 subunits each of ACCase subunit alpha and ACCase plastid-coded subunit beta (accD). It depends on Zn(2+) as a cofactor.

The protein localises to the plastid. It localises to the chloroplast stroma. The enzyme catalyses N(6)-carboxybiotinyl-L-lysyl-[protein] + acetyl-CoA = N(6)-biotinyl-L-lysyl-[protein] + malonyl-CoA. Its pathway is lipid metabolism; malonyl-CoA biosynthesis; malonyl-CoA from acetyl-CoA: step 1/1. Its function is as follows. Component of the acetyl coenzyme A carboxylase (ACC) complex. Biotin carboxylase (BC) catalyzes the carboxylation of biotin on its carrier protein (BCCP) and then the CO(2) group is transferred by the transcarboxylase to acetyl-CoA to form malonyl-CoA. The sequence is that of Acetyl-coenzyme A carboxylase carboxyl transferase subunit beta, chloroplastic from Buxus microphylla (Littleleaf boxwood).